Here is a 340-residue protein sequence, read N- to C-terminus: Galactoside alpha-(1,2)-fucosyltransferase 2 (340 aa).

The Cytoplasmic segment spans residues 1–7; that stretch reads MLSMQAS. A helical; Signal-anchor for type II membrane protein membrane pass occupies residues 8–28; the sequence is FFFPTGPFILFVFTASTIFHL. Topologically, residues 29–340 are lumenal; that stretch reads QQRMVKIQPT…EADLSPLLKH (312 aa). N185, N251, N279, and N305 each carry an N-linked (GlcNAc...) asparagine glycan.

The protein resides in the golgi apparatus. It localises to the golgi stack membrane. The enzyme catalyses a beta-D-galactosyl-(1-&gt;3)-N-acetyl-beta-D-glucosaminyl derivative + GDP-beta-L-fucose = an alpha-L-Fuc-(1-&gt;2)-beta-D-Gal-(1-&gt;3)-beta-D-GlcNAc derivative + GDP + H(+). It catalyses the reaction a beta-D-galactosyl-(1-&gt;4)-N-acetyl-beta-D-glucosaminyl derivative + GDP-beta-L-fucose = an alpha-L-Fuc-(1-&gt;2)-beta-D-Gal-(1-&gt;4)-beta-D-GlcNAc derivative + GDP + H(+). The catalysed reaction is a neolactoside nLc4Cer + GDP-beta-L-fucose = a neolactoside IV(2)-alpha-Fuc-nLc4Cer + GDP + H(+). It carries out the reaction a neolactoside nLc4Cer(d18:1(4E)) + GDP-beta-L-fucose = a neolactoside IV(2)-alpha-Fuc-nLc4Cer(d18:1(4E)) + GDP + H(+). The enzyme catalyses a ganglioside GM1 + GDP-beta-L-fucose = a ganglioside Fuc-GM1 + GDP + H(+). It catalyses the reaction a ganglioside GA1 + GDP-beta-L-fucose = a ganglioside Fuc-GA1 + GDP + H(+). The catalysed reaction is Lc4Cer + GDP-beta-L-fucose = alpha-L-fucosyl-(1-&gt;2)-beta-D-galactosyl-(1-&gt;3)-N-acetyl-beta-D-glucosaminyl-(1-&gt;3)-beta-D-galactosyl-(1-&gt;4)-beta-D-glucosyl-(1&lt;-&gt;1')-ceramide + GDP + H(+). It carries out the reaction a beta-D-Gal-(1-&gt;3)-beta-D-GlcNAc-(1-&gt;3)-beta-D-Gal-(1-&gt;4)-beta-D-Glc-(1&lt;-&gt;1')-Cer(d18:1(4E)) + GDP-beta-L-fucose = alpha-L-fucosyl-(1-&gt;2)- beta-D-galactosyl-(1-&gt;3)-N-acetyl-beta-D-glucosaminyl-(1-&gt;3)-beta-D-galactosyl-(1-&gt;4)-beta-D-glucosyl-(1&lt;-&gt;1')-N-acylsphing-4-enine + GDP + H(+). The enzyme catalyses a ganglioside GD1b + GDP-beta-L-fucose = a ganglioside Fuc-GD1b + GDP + H(+). It catalyses the reaction a ganglioside GM1 (d18:1(4E)) + GDP-beta-L-fucose = a ganglioside Fuc-GM1 (d18:1(4E)) + GDP + H(+). The catalysed reaction is a globoside GalGb4Cer (d18:1(4E)) + GDP-beta-L-fucose = a globoside Globo-H (d18:1(4E)) + GDP + H(+). It carries out the reaction a lactoside III(4)-a-Fuc-Lc4Cer + GDP-beta-L-fucose = a lactoside IV(2),III(4)-a-[Fuc]2-Lc4Cer + GDP + H(+). The enzyme catalyses beta-D-galactosyl-(1-&gt;3)-N-acetyl-D-galactosamine + GDP-beta-L-fucose = alpha-L-fucosyl-(1-&gt;2)-beta-D-galactosyl-(1-&gt;3)-N-acetyl-D-galactosamine + GDP + H(+). It functions in the pathway protein modification; protein glycosylation. Catalyzes the transfer of L-fucose, from a guanosine diphosphate-beta-L-fucose, to the terminal galactose on both O- and N-linked glycans chains of cell surface glycoproteins and glycolipids and the resulting epitope regulates several processes such as cell-cell interaction including host-microbe interaction, cell surface expression and cell proliferation. Preferentially fucosylates gangliosides GA1 and GM1 in the antrum, cecum and colon and in the female reproductive organs. Fucosylated host glycoproteins or glycolipids mediate interaction with intestinal microbiota influencing its composition. Creates a soluble precursor oligosaccharide FuC-alpha ((1,2)Galbeta-) called the H antigen which is an essential substrate for the final step in the soluble ABO blood group antigen synthesis pathway. The polypeptide is Galactoside alpha-(1,2)-fucosyltransferase 2 (Sus scrofa (Pig)).